A 466-amino-acid chain; its full sequence is MSLSLWQQCLARLQDELPATEFSMWIRPLQAELSDNTLALYAPNRFVLDWVRDKYLNNINGLLNTFCGADAPQLRFEVGTKPVTQTLKTPVHNVVAPAQTTTAQPQRVAPAARSGWDNVPAPAEPTYRSNVNVKHTFDNFVEGKSNQLARAAARQVADNPGGAYNPLFLYGGTGLGKTHLLHAVGNGIMARKPNAKVVYMHSERFVQDMVKALQNNAIEEFKRYYRSVDALLIDDIQFFANKERSQEEFFHTFNALLEGNQQIILTSDRYPKEINGVEDRLKSRFGWGLTVAIEPPELETRVAILMKKADENDIRLPGEVAFFIAKRLRSNVRELEGALNRVIANANFTGRAITIDFVREALRDLLALQEKLVTIDNIQKTVAEYYKIKIADLLSKRRSRSVARPRQMAMALAKELTNHSLPEIGDAFGGRDHTTVLHACRKIEQLREESHDIKEDFSNLIRTLSS.

The domain I, interacts with DnaA modulators stretch occupies residues 1–86 (MSLSLWQQCL…EVGTKPVTQT (86 aa)). Positions 86 to 129 (TLKTPVHNVVAPAQTTTAQPQRVAPAARSGWDNVPAPAEPTYRS) are domain II. Residues 130–346 (NVNVKHTFDN…GALNRVIANA (217 aa)) form a domain III, AAA+ region region. The ATP site is built by glycine 174, glycine 176, lysine 177, and threonine 178. The domain IV, binds dsDNA stretch occupies residues 347-466 (NFTGRAITID…FSNLIRTLSS (120 aa)).

It belongs to the DnaA family. In terms of assembly, oligomerizes as a right-handed, spiral filament on DNA at oriC.

It is found in the cytoplasm. Functionally, plays an essential role in the initiation and regulation of chromosomal replication. ATP-DnaA binds to the origin of replication (oriC) to initiate formation of the DNA replication initiation complex once per cell cycle. Binds the DnaA box (a 9 base pair repeat at the origin) and separates the double-stranded (ds)DNA. Forms a right-handed helical filament on oriC DNA; dsDNA binds to the exterior of the filament while single-stranded (ss)DNA is stabiized in the filament's interior. The ATP-DnaA-oriC complex binds and stabilizes one strand of the AT-rich DNA unwinding element (DUE), permitting loading of DNA polymerase. After initiation quickly degrades to an ADP-DnaA complex that is not apt for DNA replication. Binds acidic phospholipids. The chain is Chromosomal replication initiator protein DnaA from Salmonella agona (strain SL483).